Here is a 548-residue protein sequence, read N- to C-terminus: Probable malate:quinone oxidoreductase (548 aa).

The protein belongs to the MQO family. It depends on FAD as a cofactor.

It catalyses the reaction (S)-malate + a quinone = a quinol + oxaloacetate. The protein operates within carbohydrate metabolism; tricarboxylic acid cycle; oxaloacetate from (S)-malate (quinone route): step 1/1. This chain is Probable malate:quinone oxidoreductase, found in Escherichia coli O6:K15:H31 (strain 536 / UPEC).